The primary structure comprises 737 residues: Amyloid-beta A4 protein (737 aa).

The first 18 residues, 1–18, serve as a signal peptide directing secretion; sequence MGETTAFVLLLVATLTRS. Residues 19–668 are Extracellular-facing; sequence SEIPADDTVG…ADDVGSNKGA (650 aa). The interval 29–124 is GFLD subdomain; it reads LLTEPQVAMF…PYRCLVGEFV (96 aa). One can recognise an E1 domain in the interval 29-190; that stretch reads LLTEPQVAMF…RGVKFVCCPA (162 aa). Disulfide bonds link C39–C63, C74–C118, C99–C106, C134–C188, C145–C175, and C159–C187. The cuBD subdomain stretch occupies residues 132–190; the sequence is DKCKFLHQERMNQCESHLHWHTVAKESCGDRSMNLHDYGMLLPCGIDRFRGVKFVCCPA. Residues H148, H152, and Y169 each coordinate Cu cation. Composition is skewed to acidic residues over residues 193-207 and 242-262; these read EQET…EESD and GDGD…EQES. The interval 193-280 is disordered; sequence EQETDSSEVE…MTTTTTTTTE (88 aa). One can recognise a BPTI/Kunitz inhibitor domain in the interval 286 to 344; the sequence is VRAVCWAQAESGPCRAMLERWYFNPKKRRCVPFLFGGCGGNRNNFESEEYCLAVCSSSL. 3 cysteine pairs are disulfide-bonded: C290–C340, C299–C323, and C315–C336. Residues 354 to 545 enclose the E2 domain; the sequence is AVDQYFEAPG…SEIQNQIYPA (192 aa). N522 is a glycosylation site (N-linked (GlcNAc...) asparagine). The chain crosses the membrane as a helical span at residues 669 to 689; the sequence is IIGLMVGGVVIATVIVITLVM. Topologically, residues 690–737 are cytoplasmic; the sequence is LRKKQYTSIHHGVIEVDAAVTPEERHLARMQQNGYENPTYKFFEQMQN. The YENPXY motif motif lies at 724–729; the sequence is YENPTY. Residues 726-729 are clathrin-binding; that stretch reads NPTY.

It belongs to the APP family.

It localises to the membrane. In terms of biological role, functional neuronal receptor which couples to intracellular signaling pathway through the GTP-binding protein G(O). This Takifugu rubripes (Japanese pufferfish) protein is Amyloid-beta A4 protein (app).